The sequence spans 123 residues: Small ribosomal subunit protein uS12 (123 aa).

Residue Asp89 is modified to 3-methylthioaspartic acid.

Belongs to the universal ribosomal protein uS12 family. In terms of assembly, part of the 30S ribosomal subunit. Contacts proteins S8 and S17. May interact with IF1 in the 30S initiation complex.

Its function is as follows. With S4 and S5 plays an important role in translational accuracy. Functionally, interacts with and stabilizes bases of the 16S rRNA that are involved in tRNA selection in the A site and with the mRNA backbone. Located at the interface of the 30S and 50S subunits, it traverses the body of the 30S subunit contacting proteins on the other side and probably holding the rRNA structure together. The combined cluster of proteins S8, S12 and S17 appears to hold together the shoulder and platform of the 30S subunit. This is Small ribosomal subunit protein uS12 from Phenylobacterium zucineum (strain HLK1).